The sequence spans 179 residues: Insulin-like growth factor 2 (179 aa).

A signal peptide spans 1–24 (MGITAGKSMLALLAFLAFASCCYA). Residues 25-52 (AYRPSETLCGGELVDTLQFVCGDRGFYF) form a b region. 3 disulfides stabilise this stretch: cysteine 33-cysteine 71, cysteine 45-cysteine 84, and cysteine 70-cysteine 75. The interval 53-64 (SRPSSRINRRSR) is c. The tract at residues 65-85 (GIVEECCFRSCDLALLETYCA) is a. Positions 86–91 (APAKSE) are d. A propeptide spans 92-179 (RDVSASTTVL…GGASSEASSD (88 aa)) (e peptide). Residue threonine 106 is glycosylated (O-linked (GalNAc...) threonine). Residue serine 154 is glycosylated (O-linked (GalNAc...) serine). The disordered stretch occupies residues 160–179 (ALPTQDPATHGGASSEASSD). The O-linked (GalNAc...) threonine glycan is linked to threonine 163.

The protein belongs to the insulin family. In terms of assembly, interacts with MYORG; this interaction is required for IGF2 secretion. Interacts with integrins ITGAV:ITGB3 and ITGA6:ITGB4; integrin-binding is required for IGF2 signaling. Interacts with IGFBP2. Post-translationally, proteolytically processed by PCSK4, proIGF2 is cleaved at Arg-128 and Arg-92 to generate big-IGF2 and mature IGF2.

Its subcellular location is the secreted. Functionally, the insulin-like growth factors possess growth-promoting activity. Major fetal growth hormone in mammals. Plays a key role in regulating fetoplacental development. IGF2 is influenced by placental lactogen. Also involved in tissue differentiation. In adults, involved in glucose metabolism in adipose tissue, skeletal muscle and liver. Acts as a ligand for integrin which is required for IGF2 signaling. Positively regulates myogenic transcription factor MYOD1 function by facilitating the recruitment of transcriptional coactivators, thereby controlling muscle terminal differentiation. Inhibits myoblast differentiation and modulates metabolism via increasing the mitochondrial respiration rate. Preptin undergoes glucose-mediated co-secretion with insulin, and acts as a physiological amplifier of glucose-mediated insulin secretion. Exhibits osteogenic properties by increasing osteoblast mitogenic activity through phosphoactivation of MAPK1 and MAPK3. The sequence is that of Insulin-like growth factor 2 from Ovis aries (Sheep).